Consider the following 180-residue polypeptide: tRNA (cytidine(56)-2'-O)-methyltransferase (180 aa).

Residues Leu-82, 112 to 116 (GAEKV), and 130 to 137 (VGNQPHSE) contribute to the S-adenosyl-L-methionine site.

Belongs to the aTrm56 family. In terms of assembly, homodimer.

Its subcellular location is the cytoplasm. It catalyses the reaction cytidine(56) in tRNA + S-adenosyl-L-methionine = 2'-O-methylcytidine(56) in tRNA + S-adenosyl-L-homocysteine + H(+). Functionally, specifically catalyzes the AdoMet-dependent 2'-O-ribose methylation of cytidine at position 56 in tRNAs. The sequence is that of tRNA (cytidine(56)-2'-O)-methyltransferase from Methanococcus vannielii (strain ATCC 35089 / DSM 1224 / JCM 13029 / OCM 148 / SB).